We begin with the raw amino-acid sequence, 408 residues long: S-adenosylmethionine:tRNA ribosyltransferase-isomerase (408 aa).

It belongs to the QueA family. Monomer.

The protein resides in the cytoplasm. It catalyses the reaction 7-aminomethyl-7-carbaguanosine(34) in tRNA + S-adenosyl-L-methionine = epoxyqueuosine(34) in tRNA + adenine + L-methionine + 2 H(+). It functions in the pathway tRNA modification; tRNA-queuosine biosynthesis. Functionally, transfers and isomerizes the ribose moiety from AdoMet to the 7-aminomethyl group of 7-deazaguanine (preQ1-tRNA) to give epoxyqueuosine (oQ-tRNA). This Trichormus variabilis (strain ATCC 29413 / PCC 7937) (Anabaena variabilis) protein is S-adenosylmethionine:tRNA ribosyltransferase-isomerase.